Here is a 156-residue protein sequence, read N- to C-terminus: Probable succinate transporter subunit YjjB (156 aa).

4 helical membrane passes run Trp-7–Phe-27, Phe-54–Ile-74, Val-86–Ile-106, and Phe-128–Trp-148.

Belongs to the ThrE exporter (TC 2.A.79) family. The transporter is composed of YjjB and YjjP.

It is found in the cell inner membrane. Functionally, involved in succinate export with YjjP. Both proteins are required for export. This is Probable succinate transporter subunit YjjB from Pectobacterium atrosepticum (strain SCRI 1043 / ATCC BAA-672) (Erwinia carotovora subsp. atroseptica).